The following is a 744-amino-acid chain: Receptor-like serine/threonine-protein kinase ALE2 (744 aa).

An N-terminal signal peptide occupies residues 1–19 (MRNFAMLLLLILLLHSLAS). Residues 20–260 (FPICFARLFP…SQGIGFRTIA (241 aa)) are Extracellular-facing. Over residues 59 to 68 (PAFSPNPSRI) the composition is skewed to pro residues. Residues 59–79 (PAFSPNPSRIPPLRHKGHHRH) are disordered. A compositionally biased stretch (basic residues) spans 70 to 79 (PLRHKGHHRH). N-linked (GlcNAc...) asparagine glycosylation is found at N87, N186, N204, N243, and N249. The chain crosses the membrane as a helical span at residues 261–281 (IIALSGFVLILVLVGAISIIV). Topologically, residues 282–744 (KWKKIGKSSN…HLWSGNGDWL (463 aa)) are cytoplasmic. Positions 349 to 619 (FSAKRVLGEG…GEVVQALKLI (271 aa)) constitute a Protein kinase domain. ATP-binding positions include 355–363 (LGEGGFGRV) and K377. D470 serves as the catalytic Proton acceptor. Disordered stretches follow at residues 681–705 (EDME…PNRS) and 722–744 (GSMS…GDWL).

It belongs to the protein kinase superfamily. Ser/Thr protein kinase family. In terms of processing, autophosphorylated and phosphorylated by ACR4.

Its subcellular location is the cell membrane. It carries out the reaction L-seryl-[protein] + ATP = O-phospho-L-seryl-[protein] + ADP + H(+). The catalysed reaction is L-threonyl-[protein] + ATP = O-phospho-L-threonyl-[protein] + ADP + H(+). Required during the differentiation of the protoderm into shoots epidermis and cuticle. The protein is Receptor-like serine/threonine-protein kinase ALE2 (ALE2) of Arabidopsis thaliana (Mouse-ear cress).